The primary structure comprises 339 residues: UDP-3-O-acylglucosamine N-acyltransferase (339 aa).

Catalysis depends on His-251, which acts as the Proton acceptor.

Belongs to the transferase hexapeptide repeat family. LpxD subfamily. As to quaternary structure, homotrimer.

It catalyses the reaction a UDP-3-O-[(3R)-3-hydroxyacyl]-alpha-D-glucosamine + a (3R)-hydroxyacyl-[ACP] = a UDP-2-N,3-O-bis[(3R)-3-hydroxyacyl]-alpha-D-glucosamine + holo-[ACP] + H(+). It participates in bacterial outer membrane biogenesis; LPS lipid A biosynthesis. Functionally, catalyzes the N-acylation of UDP-3-O-acylglucosamine using 3-hydroxyacyl-ACP as the acyl donor. Is involved in the biosynthesis of lipid A, a phosphorylated glycolipid that anchors the lipopolysaccharide to the outer membrane of the cell. The protein is UDP-3-O-acylglucosamine N-acyltransferase of Paramagnetospirillum magneticum (strain ATCC 700264 / AMB-1) (Magnetospirillum magneticum).